Here is a 100-residue protein sequence, read N- to C-terminus: Urease subunit gamma (100 aa).

It belongs to the urease gamma subunit family. Heterotrimer of UreA (gamma), UreB (beta) and UreC (alpha) subunits. Three heterotrimers associate to form the active enzyme.

It is found in the cytoplasm. The enzyme catalyses urea + 2 H2O + H(+) = hydrogencarbonate + 2 NH4(+). The protein operates within nitrogen metabolism; urea degradation; CO(2) and NH(3) from urea (urease route): step 1/1. In Synechococcus sp. (strain RCC307), this protein is Urease subunit gamma.